Reading from the N-terminus, the 249-residue chain is Phycobilisome 27.9 kDa linker polypeptide, phycoerythrin-associated, rod (249 aa).

One can recognise a PBS-linker domain in the interval 2 to 166 (ASQTILELWP…LDRGPAQIDS (165 aa)). Residues 198–248 (EKRFKILVQGSKFDSPRRISTTEYIVPASKMTPQIQRINRTSGKIVSITEI) form the CpcD-like domain.

It belongs to the phycobilisome linker protein family. In terms of assembly, the phycobilisome is a hemidiscoidal structure that is composed of two distinct substructures: a core complex and six rods radiating from the core.

The protein localises to the cellular thylakoid membrane. Its function is as follows. Rod linker protein, associated with phycoerythrin. Linker polypeptides determine the state of aggregation and the location of the disk-shaped phycobiliprotein units within the phycobilisome and modulate their spectroscopic properties in order to mediate a directed and optimal energy transfer. The chain is Phycobilisome 27.9 kDa linker polypeptide, phycoerythrin-associated, rod (cpeD) from Microchaete diplosiphon (Fremyella diplosiphon).